A 469-amino-acid chain; its full sequence is Probable monogalactosyldiacylglycerol synthase 2, chloroplastic (469 aa).

Residues 1 to 42 (MVISVATPRRSIRDAVLGGVLGAGGRQLYQPLRCAFYDGAAG) constitute a chloroplast transit peptide.

This sequence belongs to the glycosyltransferase 28 family.

It is found in the plastid. It localises to the chloroplast membrane. The enzyme catalyses a 1,2-diacyl-sn-glycerol + UDP-alpha-D-galactose = a 1,2-diacyl-3-O-(beta-D-galactosyl)-sn-glycerol + UDP + H(+). Its function is as follows. Involved in the synthesis of the major structural component of photosynthetic membranes. The polypeptide is Probable monogalactosyldiacylglycerol synthase 2, chloroplastic (MGD2) (Oryza sativa subsp. japonica (Rice)).